We begin with the raw amino-acid sequence, 154 residues long: Ascorbate-specific PTS system EIIA component (154 aa).

The 145-residue stretch at 6–150 (SLAENNSIRL…QEVLDLIDRT (145 aa)) folds into the PTS EIIA type-2 domain. His-68 serves as the catalytic Tele-phosphohistidine intermediate. Phosphohistidine is present on His-68.

It is found in the cytoplasm. In terms of biological role, the phosphoenolpyruvate-dependent sugar phosphotransferase system (sugar PTS), a major carbohydrate active transport system, catalyzes the phosphorylation of incoming sugar substrates concomitantly with their translocation across the cell membrane. The enzyme II UlaABC PTS system is involved in ascorbate transport. The chain is Ascorbate-specific PTS system EIIA component (ulaC) from Salmonella paratyphi A (strain ATCC 9150 / SARB42).